A 125-amino-acid polypeptide reads, in one-letter code: Large ribosomal subunit protein bL12 (125 aa).

This sequence belongs to the bacterial ribosomal protein bL12 family. As to quaternary structure, homodimer. Part of the ribosomal stalk of the 50S ribosomal subunit. Forms a multimeric L10(L12)X complex, where L10 forms an elongated spine to which 2 to 4 L12 dimers bind in a sequential fashion. Binds GTP-bound translation factors.

Functionally, forms part of the ribosomal stalk which helps the ribosome interact with GTP-bound translation factors. Is thus essential for accurate translation. The polypeptide is Large ribosomal subunit protein bL12 (Helicobacter pylori (strain HPAG1)).